Reading from the N-terminus, the 145-residue chain is Large ribosomal subunit protein uL15 (145 aa).

A disordered region spans residues 1–57 (MKLNDLSPAPGSRREKHRPGRGIGSGLGKTGGRGHKGQTSRSGGTIAPGFEGGQQPL). A compositionally biased stretch (gly residues) spans 21-31 (RGIGSGLGKTG).

Belongs to the universal ribosomal protein uL15 family. As to quaternary structure, part of the 50S ribosomal subunit.

In terms of biological role, binds to the 23S rRNA. The chain is Large ribosomal subunit protein uL15 from Pseudomonas fluorescens (strain Pf0-1).